Consider the following 866-residue polypeptide: Probable outer membrane usher protein ElfC (866 aa).

The N-terminal stretch at 1 to 35 (MYRTHRQHSLLSSGGVPSFIGGLVVFVSAAFNAQA) is a signal peptide.

This sequence belongs to the fimbrial export usher family.

The protein resides in the cell outer membrane. Part of the elfADCG-ycbUVF fimbrial operon, which promotes adhesion of bacteria to different abiotic surfaces. Could be involved in the export and assembly of the ElfA fimbrial subunits across the outer membrane. This is Probable outer membrane usher protein ElfC (elfC) from Escherichia coli (strain K12).